A 323-amino-acid chain; its full sequence is Phosphomevalonate kinase (323 aa).

The protein belongs to the GHMP kinase family. As to quaternary structure, homodimer. It depends on Mg(2+) as a cofactor.

It carries out the reaction (R)-5-phosphomevalonate + ATP = (R)-5-diphosphomevalonate + ADP. Its pathway is isoprenoid biosynthesis; isopentenyl diphosphate biosynthesis via mevalonate pathway; isopentenyl diphosphate from (R)-mevalonate: step 2/3. Functionally, catalyzes the phosphorylation of (R)-mevalonate 5-phosphate (MVAP) to (R)-mevalonate 5-diphosphate (MVAPP). Functions in the mevalonate (MVA) pathway leading to isopentenyl diphosphate (IPP), a key precursor for the biosynthesis of isoprenoid compounds such as archaeal membrane lipids. The polypeptide is Phosphomevalonate kinase (Saccharolobus solfataricus (strain ATCC 35092 / DSM 1617 / JCM 11322 / P2) (Sulfolobus solfataricus)).